The primary structure comprises 350 residues: Type II restriction enzyme NgoBI (350 aa).

It catalyses the reaction Endonucleolytic cleavage of DNA to give specific double-stranded fragments with terminal 5'-phosphates.. In terms of biological role, a P subtype restriction enzyme that recognizes the double-stranded sequence 5'-RGCGCY-3'; the cleavage site is unknown. This is Type II restriction enzyme NgoBI (ngoBIR) from Neisseria gonorrhoeae.